The primary structure comprises 212 residues: MRKVLLTGFEPFGGESINPSLELVKQMASRALPQVEIIGCEVPVVRYQAIETVLQAVETHQPDLVLMIGQASGRCAITPERVAINLDDYRIEDNAGHQPVDEPIIATGPAAYFSTLPVKAITHALQQAGIPCQISHSAGTFVCNHLFYGVQHHLHTRAIRSGFIHIPLLPEQASASNQPSMSLETLVHGLEMMMITCLETEQDTKHTGGTIC.

Active-site residues include Glu-80, Cys-143, and His-165.

The protein belongs to the peptidase C15 family. Homotetramer.

The protein localises to the cytoplasm. The catalysed reaction is Release of an N-terminal pyroglutamyl group from a polypeptide, the second amino acid generally not being Pro.. Functionally, removes 5-oxoproline from various penultimate amino acid residues except L-proline. The protein is Pyrrolidone-carboxylate peptidase of Vibrio vulnificus (strain YJ016).